We begin with the raw amino-acid sequence, 711 residues long: Ribosomal RNA large subunit methyltransferase K/L (711 aa).

The THUMP domain maps to 42 to 153; sequence DAQRAVLWSR…KGRATISVDL (112 aa).

It belongs to the methyltransferase superfamily. RlmKL family.

The protein localises to the cytoplasm. It carries out the reaction guanosine(2445) in 23S rRNA + S-adenosyl-L-methionine = N(2)-methylguanosine(2445) in 23S rRNA + S-adenosyl-L-homocysteine + H(+). The enzyme catalyses guanosine(2069) in 23S rRNA + S-adenosyl-L-methionine = N(2)-methylguanosine(2069) in 23S rRNA + S-adenosyl-L-homocysteine + H(+). Its function is as follows. Specifically methylates the guanine in position 2445 (m2G2445) and the guanine in position 2069 (m7G2069) of 23S rRNA. The sequence is that of Ribosomal RNA large subunit methyltransferase K/L from Xanthomonas campestris pv. campestris (strain B100).